The chain runs to 824 residues: Leucine--tRNA ligase (824 aa).

Positions 41 to 51 (PYPSGTLHVGH) match the 'HIGH' region motif. Positions 580–584 (KMSKS) match the 'KMSKS' region motif. Residue K583 coordinates ATP.

Belongs to the class-I aminoacyl-tRNA synthetase family.

Its subcellular location is the cytoplasm. It catalyses the reaction tRNA(Leu) + L-leucine + ATP = L-leucyl-tRNA(Leu) + AMP + diphosphate. The chain is Leucine--tRNA ligase from Thermotoga maritima (strain ATCC 43589 / DSM 3109 / JCM 10099 / NBRC 100826 / MSB8).